Here is a 605-residue protein sequence, read N- to C-terminus: Proline--tRNA ligase (605 aa).

Belongs to the class-II aminoacyl-tRNA synthetase family. ProS type 1 subfamily. In terms of assembly, homodimer.

It is found in the cytoplasm. The catalysed reaction is tRNA(Pro) + L-proline + ATP = L-prolyl-tRNA(Pro) + AMP + diphosphate. In terms of biological role, catalyzes the attachment of proline to tRNA(Pro) in a two-step reaction: proline is first activated by ATP to form Pro-AMP and then transferred to the acceptor end of tRNA(Pro). As ProRS can inadvertently accommodate and process non-cognate amino acids such as alanine and cysteine, to avoid such errors it has two additional distinct editing activities against alanine. One activity is designated as 'pretransfer' editing and involves the tRNA(Pro)-independent hydrolysis of activated Ala-AMP. The other activity is designated 'posttransfer' editing and involves deacylation of mischarged Ala-tRNA(Pro). The misacylated Cys-tRNA(Pro) is not edited by ProRS. The chain is Proline--tRNA ligase from Bifidobacterium adolescentis (strain ATCC 15703 / DSM 20083 / NCTC 11814 / E194a).